A 470-amino-acid chain; its full sequence is ATP synthase subunit beta (470 aa).

157–164 contacts ATP; sequence GGAGVGKT.

Belongs to the ATPase alpha/beta chains family. As to quaternary structure, F-type ATPases have 2 components, CF(1) - the catalytic core - and CF(0) - the membrane proton channel. CF(1) has five subunits: alpha(3), beta(3), gamma(1), delta(1), epsilon(1). CF(0) has three main subunits: a(1), b(2) and c(9-12). The alpha and beta chains form an alternating ring which encloses part of the gamma chain. CF(1) is attached to CF(0) by a central stalk formed by the gamma and epsilon chains, while a peripheral stalk is formed by the delta and b chains.

Its subcellular location is the cell membrane. The enzyme catalyses ATP + H2O + 4 H(+)(in) = ADP + phosphate + 5 H(+)(out). Functionally, produces ATP from ADP in the presence of a proton gradient across the membrane. The catalytic sites are hosted primarily by the beta subunits. The sequence is that of ATP synthase subunit beta from Pelotomaculum thermopropionicum (strain DSM 13744 / JCM 10971 / SI).